The chain runs to 498 residues: Glycerol kinase (498 aa).

An ADP-binding site is contributed by Thr-12. Positions 12, 13, and 14 each coordinate ATP. Thr-12 lines the sn-glycerol 3-phosphate pocket. Arg-16 serves as a coordination point for ADP. Residues Arg-82, Glu-83, Tyr-134, and Asp-244 each coordinate sn-glycerol 3-phosphate. Residues Arg-82, Glu-83, Tyr-134, Asp-244, and Gln-245 each contribute to the glycerol site. Residues Thr-266 and Gly-310 each coordinate ADP. ATP-binding residues include Thr-266, Gly-310, Gln-314, and Gly-411. ADP-binding residues include Gly-411 and Asn-415.

It belongs to the FGGY kinase family.

It catalyses the reaction glycerol + ATP = sn-glycerol 3-phosphate + ADP + H(+). Its pathway is polyol metabolism; glycerol degradation via glycerol kinase pathway; sn-glycerol 3-phosphate from glycerol: step 1/1. Its activity is regulated as follows. Inhibited by fructose 1,6-bisphosphate (FBP). Its function is as follows. Key enzyme in the regulation of glycerol uptake and metabolism. Catalyzes the phosphorylation of glycerol to yield sn-glycerol 3-phosphate. The protein is Glycerol kinase of Azorhizobium caulinodans (strain ATCC 43989 / DSM 5975 / JCM 20966 / LMG 6465 / NBRC 14845 / NCIMB 13405 / ORS 571).